Reading from the N-terminus, the 142-residue chain is Large ribosomal subunit protein uL11 (142 aa).

Belongs to the universal ribosomal protein uL11 family. In terms of assembly, part of the ribosomal stalk of the 50S ribosomal subunit. Interacts with L10 and the large rRNA to form the base of the stalk. L10 forms an elongated spine to which L12 dimers bind in a sequential fashion forming a multimeric L10(L12)X complex. In terms of processing, one or more lysine residues are methylated.

Its function is as follows. Forms part of the ribosomal stalk which helps the ribosome interact with GTP-bound translation factors. This chain is Large ribosomal subunit protein uL11, found in Rhizobium meliloti (strain 1021) (Ensifer meliloti).